The following is a 248-amino-acid chain: Ras-like protein family member 11B (248 aa).

The segment at 30–248 (ASSRVIKIAV…SSKVRTATSV (219 aa)) is small GTPase-like. Residues 41-48 (GGSGVGKT), 88-99 (DTPGVQINEQNL), and 153-156 (NKAD) each bind GTP. The disordered stretch occupies residues 206–228 (QNTGTSERRKNSIIPRPKSPNMQ).

The protein belongs to the small GTPase superfamily. Ras family.

The catalysed reaction is GTP + H2O = GDP + phosphate + H(+). The sequence is that of Ras-like protein family member 11B from Xenopus laevis (African clawed frog).